Consider the following 156-residue polypeptide: E3 ubiquitin-protein ligase RNF181 (156 aa).

The RING-type; atypical zinc finger occupies 79–120 (CPVCLLEFEEQESVREMPCKHLFHTGCILPWLNKTNSCPLCR). Residues 135 to 156 (KDKERRRQREHRLEDLHGAMYT) are disordered.

This sequence belongs to the RNF181 family.

The enzyme catalyses S-ubiquitinyl-[E2 ubiquitin-conjugating enzyme]-L-cysteine + [acceptor protein]-L-lysine = [E2 ubiquitin-conjugating enzyme]-L-cysteine + N(6)-ubiquitinyl-[acceptor protein]-L-lysine.. It functions in the pathway protein modification; protein ubiquitination. Its function is as follows. E3 ubiquitin-protein ligase which accepts ubiquitin from an E2 ubiquitin-conjugating enzyme in the form of a thioester and then directly transfers the ubiquitin to targeted substrates. Catalyzes monoubiquitination of 26S proteasome subunit PSMC2/RPT1. In Danio rerio (Zebrafish), this protein is E3 ubiquitin-protein ligase RNF181 (rnf181).